Consider the following 729-residue polypeptide: Probable pre-mRNA-splicing factor ATP-dependent RNA helicase DEAH3 (729 aa).

One can recognise a Helicase ATP-binding domain in the interval 75 to 244 (LNTLNSNQTL…FSGAPLMKVP (170 aa)). 88-95 (GETGSGKT) is an ATP binding site. Positions 191-194 (DEAH) match the DEAH box motif. Residues 269–449 (TVVQIHMCEP…NTVLTLKKLG (181 aa)) enclose the Helicase C-terminal domain.

Belongs to the DEAD box helicase family. DEAH subfamily. PRP43 sub-subfamily.

It catalyses the reaction ATP + H2O = ADP + phosphate + H(+). May be involved in pre-mRNA splicing. The polypeptide is Probable pre-mRNA-splicing factor ATP-dependent RNA helicase DEAH3 (Arabidopsis thaliana (Mouse-ear cress)).